The primary structure comprises 65 residues: MKTTILLVILGLTLLFALSAATELKDEERDCKGFQVKCKKDSECCSSYVCGSQWKWCVYPSPFGR.

The signal sequence occupies residues 1–21 (MKTTILLVILGLTLLFALSAA). Residues 22 to 29 (TELKDEER) constitute a propeptide that is removed on maturation. Cystine bridges form between Cys31/Cys45, Cys38/Cys50, and Cys44/Cys57.

The protein belongs to the neurotoxin 10 (Hwtx-1) family. 32 (Jztx-16) subfamily. Expressed by the venom gland.

The protein resides in the secreted. Functionally, probable ion channel inhibitor. The polypeptide is U11-theraphotoxin-Cg1a (Chilobrachys guangxiensis (Chinese earth tiger tarantula)).